The chain runs to 362 residues: Putative integrase ORF3 (362 aa).

The region spanning 179–359 (YEVKEIGLLQ…TPFNFLNSLS (181 aa)) is the Integrase catalytic domain. Mg(2+) is bound by residues aspartate 190 and aspartate 256.

It belongs to the plectrovirus integrase ORF3 family.

Functionally, this protein may encode an integrase, which is necessary for integration of the viral DNA into host genome. The polypeptide is Putative integrase ORF3 (Spiroplasma melliferum (SpV1)).